A 456-amino-acid polypeptide reads, in one-letter code: Probable flavin-containing monoamine oxidase A (456 aa).

The residue at position 394 (C394) is an S-8alpha-FAD cysteine.

It belongs to the flavin monoamine oxidase family. The cofactor is FAD.

The enzyme catalyses a secondary aliphatic amine + O2 + H2O = a primary amine + an aldehyde + H2O2. In Dictyostelium discoideum (Social amoeba), this protein is Probable flavin-containing monoamine oxidase A (maoA).